The following is a 229-amino-acid chain: Sec-independent protein translocase protein TatB (229 aa).

Residues 1 to 21 (MFDIGFSELLLFGVIALIVLG) traverse the membrane as a helical segment. Residues 90–131 (EFEHSQSQNLKTSDKAASPANQANNDSAIQNNNEPATFSYAY) form a disordered region. Over residues 108–131 (PANQANNDSAIQNNNEPATFSYAY) the composition is skewed to polar residues.

It belongs to the TatB family. As to quaternary structure, the Tat system comprises two distinct complexes: a TatABC complex, containing multiple copies of TatA, TatB and TatC subunits, and a separate TatA complex, containing only TatA subunits. Substrates initially bind to the TatABC complex, which probably triggers association of the separate TatA complex to form the active translocon.

The protein resides in the cell inner membrane. Functionally, part of the twin-arginine translocation (Tat) system that transports large folded proteins containing a characteristic twin-arginine motif in their signal peptide across membranes. Together with TatC, TatB is part of a receptor directly interacting with Tat signal peptides. TatB may form an oligomeric binding site that transiently accommodates folded Tat precursor proteins before their translocation. This Psychrobacter arcticus (strain DSM 17307 / VKM B-2377 / 273-4) protein is Sec-independent protein translocase protein TatB.